Here is a 53-residue protein sequence, read N- to C-terminus: uncharacterized protein (53 aa).

This is an uncharacterized protein from Plasmodium falciparum (isolate fcm17 / Senegal).